The chain runs to 97 residues: Integration host factor subunit alpha (97 aa).

The protein belongs to the bacterial histone-like protein family. As to quaternary structure, heterodimer of an alpha and a beta chain.

This protein is one of the two subunits of integration host factor, a specific DNA-binding protein that functions in genetic recombination as well as in transcriptional and translational control. This Hydrogenovibrio crunogenus (strain DSM 25203 / XCL-2) (Thiomicrospira crunogena) protein is Integration host factor subunit alpha.